Here is a 540-residue protein sequence, read N- to C-terminus: Collagen alpha-1(XXIII) chain (540 aa).

The span at 1–26 shows a compositional bias: gly residues; the sequence is MGPGERAGGGGDAGKGNAAGGGGGGR. Positions 1–28 are disordered; it reads MGPGERAGGGGDAGKGNAAGGGGGGRSA. Residues 1 to 34 are Cytoplasmic-facing; the sequence is MGPGERAGGGGDAGKGNAAGGGGGGRSATTAGSR. Residues 35-56 traverse the membrane as a helical; Signal-anchor for type II membrane protein segment; that stretch reads AVSALCLLLSVGSAAACLLLGV. The Extracellular portion of the chain corresponds to 57 to 540; that stretch reads QAAALQGRVA…GLPVPGCWHK (484 aa). 2 disordered regions span residues 109 to 304 and 316 to 540; these read AREA…GEQG and LDAL…CWHK. Collagen-like domains lie at 124–243, 251–305, 321–380, 412–460, and 463–522; these read GRRG…PGKK, QPGP…EQGD, GPPG…MGLS, GPPG…GPPG, and GLPG…PGLD. 2 stretches are compositionally biased toward low complexity: residues 140-156 and 168-183; these read QSGRDGYPGPLGLDGKP and PGDFGPRGDQGQDGAA. Over residues 185-195 the composition is skewed to pro residues; that stretch reads PPGPPGPPGAR. A compositionally biased stretch (pro residues) spans 322–334; that stretch reads PPGPQGPPGPPGI. A compositionally biased stretch (basic and acidic residues) spans 350 to 362; sequence DGEKGPKGQKGDP. Pro residues predominate over residues 411 to 422; the sequence is PGPPGPPGPPGP. 2 stretches are compositionally biased toward basic and acidic residues: residues 435-444 and 486-503; these read DGAKGEKGAS and RGEKGDRSERGEKGERGV.

Homotrimer. Undergoes proteolytic cleavage by furin protease to yield a 60 kDa soluble form that forms a homotrimer and exhibits a low affinity interaction with heparin.

Its subcellular location is the cell membrane. The polypeptide is Collagen alpha-1(XXIII) chain (COL23A1) (Homo sapiens (Human)).